We begin with the raw amino-acid sequence, 529 residues long: UDP-glucuronosyltransferase 2B18 (529 aa).

The N-terminal stretch at 1 to 21 (MSVKWTSVILLIQLSFYFSSG) is a signal peptide. N-linked (GlcNAc...) asparagine glycosylation is found at Asn-67 and Asn-68. Residues 493 to 513 (VIGFLLACVATVIFIIMKCCL) form a helical membrane-spanning segment.

It belongs to the UDP-glycosyltransferase family. As to expression, expressed in liver, prostate, kidney, testis, adrenal, bile duct, bladder, colon, small intestine, cerebellum and pancreas.

The protein localises to the microsome membrane. The protein resides in the endoplasmic reticulum membrane. It catalyses the reaction glucuronate acceptor + UDP-alpha-D-glucuronate = acceptor beta-D-glucuronoside + UDP + H(+). UDPGT is of major importance in the conjugation and subsequent elimination of potentially toxic xenobiotics and endogenous compounds. This isozyme displays activity toward 3-hydroxyandrogens. It is principally active on C19 steroids having a hydroxyl group at position 3-alpha of the steroid molecule and also active on planar phenols and bile acids. The sequence is that of UDP-glucuronosyltransferase 2B18 (UGT2B18) from Macaca fascicularis (Crab-eating macaque).